The primary structure comprises 237 residues: Phosphoribosylaminoimidazole-succinocarboxamide synthase (237 aa).

This sequence belongs to the SAICAR synthetase family.

It catalyses the reaction 5-amino-1-(5-phospho-D-ribosyl)imidazole-4-carboxylate + L-aspartate + ATP = (2S)-2-[5-amino-1-(5-phospho-beta-D-ribosyl)imidazole-4-carboxamido]succinate + ADP + phosphate + 2 H(+). Its pathway is purine metabolism; IMP biosynthesis via de novo pathway; 5-amino-1-(5-phospho-D-ribosyl)imidazole-4-carboxamide from 5-amino-1-(5-phospho-D-ribosyl)imidazole-4-carboxylate: step 1/2. In Pectobacterium atrosepticum (strain SCRI 1043 / ATCC BAA-672) (Erwinia carotovora subsp. atroseptica), this protein is Phosphoribosylaminoimidazole-succinocarboxamide synthase.